Here is a 399-residue protein sequence, read N- to C-terminus: Acetate kinase (399 aa).

Asparagine 9 provides a ligand contact to Mg(2+). Lysine 16 provides a ligand contact to ATP. Arginine 90 serves as a coordination point for substrate. Aspartate 147 (proton donor/acceptor) is an active-site residue. Residues 207–211 (HLGNG), 281–283 (DFR), and 333–337 (GVGEN) each bind ATP. Residue glutamate 387 participates in Mg(2+) binding.

This sequence belongs to the acetokinase family. As to quaternary structure, homodimer. It depends on Mg(2+) as a cofactor. The cofactor is Mn(2+).

The protein resides in the cytoplasm. The enzyme catalyses acetate + ATP = acetyl phosphate + ADP. It functions in the pathway metabolic intermediate biosynthesis; acetyl-CoA biosynthesis; acetyl-CoA from acetate: step 1/2. Its function is as follows. Catalyzes the formation of acetyl phosphate from acetate and ATP. Can also catalyze the reverse reaction. In Mycobacterium sp. (strain JLS), this protein is Acetate kinase.